Consider the following 677-residue polypeptide: DNA-directed RNA polymerase subunit beta' (677 aa).

Cysteine 69, cysteine 71, cysteine 87, and cysteine 90 together coordinate Zn(2+). Aspartate 489, aspartate 491, and aspartate 493 together coordinate Mg(2+).

This sequence belongs to the RNA polymerase beta' chain family. RpoC1 subfamily. As to quaternary structure, in plastids the minimal PEP RNA polymerase catalytic core is composed of four subunits: alpha, beta, beta', and beta''. When a (nuclear-encoded) sigma factor is associated with the core the holoenzyme is formed, which can initiate transcription. Mg(2+) is required as a cofactor. Requires Zn(2+) as cofactor.

Its subcellular location is the plastid. It localises to the chloroplast. It catalyses the reaction RNA(n) + a ribonucleoside 5'-triphosphate = RNA(n+1) + diphosphate. DNA-dependent RNA polymerase catalyzes the transcription of DNA into RNA using the four ribonucleoside triphosphates as substrates. The protein is DNA-directed RNA polymerase subunit beta' of Daucus carota (Wild carrot).